We begin with the raw amino-acid sequence, 136 residues long: UPF0213 protein ASA_0550 (136 aa).

Residues 17–92 (GQWSIYLVRT…KQQSKAFKER (76 aa)) enclose the GIY-YIG domain.

It belongs to the UPF0213 family.

This Aeromonas salmonicida (strain A449) protein is UPF0213 protein ASA_0550.